The sequence spans 437 residues: tRNA(Ile2) 2-agmatinylcytidine synthetase TiaS (437 aa).

The protein belongs to the TiaS family.

The protein resides in the cytoplasm. It carries out the reaction cytidine(34) in tRNA(Ile2) + agmatine + ATP + H2O = 2-agmatinylcytidine(34) in tRNA(Ile2) + AMP + 2 phosphate + 2 H(+). ATP-dependent agmatine transferase that catalyzes the formation of 2-agmatinylcytidine (agm2C) at the wobble position (C34) of tRNA(Ile2), converting the codon specificity from AUG to AUA. The chain is tRNA(Ile2) 2-agmatinylcytidine synthetase TiaS from Thermoplasma volcanium (strain ATCC 51530 / DSM 4299 / JCM 9571 / NBRC 15438 / GSS1).